Reading from the N-terminus, the 332-residue chain is Junctional sarcoplasmic reticulum protein 1 (332 aa).

A mediates interaction with CACNA1S region spans residues 1-80; that stretch reads MTTRGLEDLD…EKELAGKEST (80 aa). Disordered regions lie at residues 1-125 and 159-332; these read MTTR…PWGD and APHP…KGRD. T51 bears the Phosphothreonine mark. Residues 66 to 76 are compositionally biased toward basic and acidic residues; that stretch reads GLKKMEKELAG. Composition is skewed to pro residues over residues 98–116 and 177–197; these read QAPPPLQPPPPPLQPPPRT and APKPPVLVSPSGSPQPKPGPP. Residues 221-232 are compositionally biased toward low complexity; the sequence is GGSISEASGEES. A phosphoserine mark is found at S223 and S228. 2 stretches are compositionally biased toward basic and acidic residues: residues 239–256 and 283–307; these read GSQEKPRKEKPSKGEKLK and RRWEAREGGRRPWGRDSRDLLEHGK.

As to quaternary structure, interacts with CACNA1S, CACNB1 and calsequestrin. As to expression, specifically expressed in skeletal muscle. Detected in skeletal muscle and tongue (at protein level).

It is found in the sarcoplasmic reticulum membrane. Its subcellular location is the endoplasmic reticulum membrane. In terms of biological role, involved in skeletal muscle excitation/contraction coupling (EC), probably acting as a regulator of the voltage-sensitive calcium channel CACNA1S. EC is a physiological process whereby an electrical signal (depolarization of the plasma membrane) is converted into a chemical signal, a calcium gradient, by the opening of ryanodine receptor calcium release channels. May regulate CACNA1S membrane targeting and activity. The polypeptide is Junctional sarcoplasmic reticulum protein 1 (Jsrp1) (Mus musculus (Mouse)).